We begin with the raw amino-acid sequence, 163 residues long: Large ribosomal subunit protein uL10 (163 aa).

The protein belongs to the universal ribosomal protein uL10 family. Part of the ribosomal stalk of the 50S ribosomal subunit. The N-terminus interacts with L11 and the large rRNA to form the base of the stalk. The C-terminus forms an elongated spine to which L12 dimers bind in a sequential fashion forming a multimeric L10(L12)X complex.

Forms part of the ribosomal stalk, playing a central role in the interaction of the ribosome with GTP-bound translation factors. This chain is Large ribosomal subunit protein uL10, found in Haemophilus influenzae (strain 86-028NP).